The following is a 347-amino-acid chain: Methylthioribose-1-phosphate isomerase (347 aa).

Residues Arg-46–Ala-48, Arg-89, and Gln-196 contribute to the substrate site. Asp-237 serves as the catalytic Proton donor. Asn-247 to Lys-248 provides a ligand contact to substrate.

Belongs to the eIF-2B alpha/beta/delta subunits family. MtnA subfamily.

It carries out the reaction 5-(methylsulfanyl)-alpha-D-ribose 1-phosphate = 5-(methylsulfanyl)-D-ribulose 1-phosphate. The protein operates within amino-acid biosynthesis; L-methionine biosynthesis via salvage pathway; L-methionine from S-methyl-5-thio-alpha-D-ribose 1-phosphate: step 1/6. Its function is as follows. Catalyzes the interconversion of methylthioribose-1-phosphate (MTR-1-P) into methylthioribulose-1-phosphate (MTRu-1-P). The chain is Methylthioribose-1-phosphate isomerase from Chloroflexus aurantiacus (strain ATCC 29366 / DSM 635 / J-10-fl).